Here is a 470-residue protein sequence, read N- to C-terminus: Uronate isomerase (470 aa).

The protein belongs to the metallo-dependent hydrolases superfamily. Uronate isomerase family.

It catalyses the reaction D-glucuronate = D-fructuronate. The enzyme catalyses aldehydo-D-galacturonate = keto-D-tagaturonate. Its pathway is carbohydrate metabolism; pentose and glucuronate interconversion. The protein is Uronate isomerase of Escherichia coli O157:H7 (strain EC4115 / EHEC).